Reading from the N-terminus, the 154-residue chain is Deoxyuridine 5'-triphosphate nucleotidohydrolase (154 aa).

Substrate-binding positions include 72-74 (RSG), asparagine 85, 89-91 (LID), and methionine 99.

This sequence belongs to the dUTPase family. The cofactor is Mg(2+).

It catalyses the reaction dUTP + H2O = dUMP + diphosphate + H(+). It participates in pyrimidine metabolism; dUMP biosynthesis; dUMP from dCTP (dUTP route): step 2/2. Its function is as follows. This enzyme is involved in nucleotide metabolism: it produces dUMP, the immediate precursor of thymidine nucleotides and it decreases the intracellular concentration of dUTP so that uracil cannot be incorporated into DNA. This chain is Deoxyuridine 5'-triphosphate nucleotidohydrolase, found in Psychrobacter arcticus (strain DSM 17307 / VKM B-2377 / 273-4).